A 64-amino-acid chain; its full sequence is Non-structural protein 3b (64 aa).

The sequence is that of Non-structural protein 3b from Avian infectious bronchitis virus (strain Beaudette) (IBV).